The following is a 517-amino-acid chain: MTVTPALLVILDGFGYREDSHDNAIALANTPNIDRFWTQYPHTLINASETFVGLPRGQMGNSEVGHLNIGAGRVVFQDFERINQAIASREFFSNPVLIEAVNKAKAGHKAVHILGLLSDGGVHSHQDHIHATIEMAVNAGVEKVYVHAFLDGRDTPPISAKPYLEKLEQACASIGGGKIASICGRFYAMDRDKRWPRVEAAYNLITDGQGEFASASALQGLEAAYARDEKDEFVKATAIAAAGEQPVTMEDGDVVIFVNFRSDRARQLTHALLDPDFEGFNRRRQPKLAGFYTLTLYDKAETRAKPIFAPVEIRNTFGEYVAQHGLKQLRIAETEKYPHVTFFFNGGEEQVFAGEDRILVPSPKVATYDLQPEMSAYEVTDRLEAAILSRKYDAIICNYANCDMVGHSGDLSASIKAVETIDTCIARIVKAMESIGGQMIITADHGNVEQMRDYENNQPHTQHTTNQVPLFFIGKPATLAAPGTGSLCDLAPSLLAMMGLKQPPEMTGKSLVAFQAA.

Residues aspartate 12 and serine 62 each coordinate Mn(2+). Serine 62 acts as the Phosphoserine intermediate in catalysis. Substrate is bound by residues histidine 123, 153-154, arginine 185, arginine 191, 261-264, and lysine 336; these read RD and RSDR. Mn(2+) is bound by residues aspartate 403, histidine 407, aspartate 444, histidine 445, and histidine 463.

The protein belongs to the BPG-independent phosphoglycerate mutase family. As to quaternary structure, monomer. Mn(2+) serves as cofactor.

It catalyses the reaction (2R)-2-phosphoglycerate = (2R)-3-phosphoglycerate. Its pathway is carbohydrate degradation; glycolysis; pyruvate from D-glyceraldehyde 3-phosphate: step 3/5. Functionally, catalyzes the interconversion of 2-phosphoglycerate and 3-phosphoglycerate. This chain is 2,3-bisphosphoglycerate-independent phosphoglycerate mutase, found in Methylobacillus flagellatus (strain ATCC 51484 / DSM 6875 / VKM B-1610 / KT).